The following is a 237-amino-acid chain: Ubiquinone biosynthesis O-methyltransferase (237 aa).

The S-adenosyl-L-methionine site is built by arginine 38, glycine 58, aspartate 79, and methionine 124.

The protein belongs to the methyltransferase superfamily. UbiG/COQ3 family.

The enzyme catalyses a 3-demethylubiquinol + S-adenosyl-L-methionine = a ubiquinol + S-adenosyl-L-homocysteine + H(+). The catalysed reaction is a 3-(all-trans-polyprenyl)benzene-1,2-diol + S-adenosyl-L-methionine = a 2-methoxy-6-(all-trans-polyprenyl)phenol + S-adenosyl-L-homocysteine + H(+). It functions in the pathway cofactor biosynthesis; ubiquinone biosynthesis. Functionally, O-methyltransferase that catalyzes the 2 O-methylation steps in the ubiquinone biosynthetic pathway. The chain is Ubiquinone biosynthesis O-methyltransferase from Acinetobacter baumannii (strain SDF).